We begin with the raw amino-acid sequence, 1370 residues long: DNA-directed RNA polymerase subunit beta (1370 aa).

The protein belongs to the RNA polymerase beta chain family. The RNAP catalytic core consists of 2 alpha, 1 beta, 1 beta' and 1 omega subunit. When a sigma factor is associated with the core the holoenzyme is formed, which can initiate transcription.

The enzyme catalyses RNA(n) + a ribonucleoside 5'-triphosphate = RNA(n+1) + diphosphate. In terms of biological role, DNA-dependent RNA polymerase catalyzes the transcription of DNA into RNA using the four ribonucleoside triphosphates as substrates. The chain is DNA-directed RNA polymerase subunit beta from Bordetella parapertussis (strain 12822 / ATCC BAA-587 / NCTC 13253).